Reading from the N-terminus, the 217-residue chain is Probable transaldolase (217 aa).

The Schiff-base intermediate with substrate role is filled by Lys-83.

Belongs to the transaldolase family. Type 3B subfamily.

Its subcellular location is the cytoplasm. It catalyses the reaction D-sedoheptulose 7-phosphate + D-glyceraldehyde 3-phosphate = D-erythrose 4-phosphate + beta-D-fructose 6-phosphate. Its pathway is carbohydrate degradation; pentose phosphate pathway; D-glyceraldehyde 3-phosphate and beta-D-fructose 6-phosphate from D-ribose 5-phosphate and D-xylulose 5-phosphate (non-oxidative stage): step 2/3. Transaldolase is important for the balance of metabolites in the pentose-phosphate pathway. The protein is Probable transaldolase of Phenylobacterium zucineum (strain HLK1).